A 446-amino-acid chain; its full sequence is Xylose isomerase 2 (446 aa).

Residues histidine 109 and aspartate 112 contribute to the active site. The Mg(2+) site is built by glutamate 240, glutamate 276, histidine 279, aspartate 304, aspartate 315, aspartate 317, and aspartate 347.

The protein belongs to the xylose isomerase family. As to quaternary structure, homotetramer. Mg(2+) serves as cofactor.

The protein localises to the cytoplasm. The catalysed reaction is alpha-D-xylose = alpha-D-xylulofuranose. This is Xylose isomerase 2 from Xanthomonas campestris pv. campestris (strain 8004).